The sequence spans 311 residues: Methionyl-tRNA formyltransferase (311 aa).

(6S)-5,6,7,8-tetrahydrofolate is bound at residue 112-115 (SLLP).

Belongs to the Fmt family.

The enzyme catalyses L-methionyl-tRNA(fMet) + (6R)-10-formyltetrahydrofolate = N-formyl-L-methionyl-tRNA(fMet) + (6S)-5,6,7,8-tetrahydrofolate + H(+). In terms of biological role, attaches a formyl group to the free amino group of methionyl-tRNA(fMet). The formyl group appears to play a dual role in the initiator identity of N-formylmethionyl-tRNA by promoting its recognition by IF2 and preventing the misappropriation of this tRNA by the elongation apparatus. This chain is Methionyl-tRNA formyltransferase, found in Chelativorans sp. (strain BNC1).